The primary structure comprises 335 residues: Dehydration-responsive element-binding protein 2A (335 aa).

2 disordered regions span residues 1-32 (MAVYDQSGDRNRTQIDTSRKRKSRSRGDGTTV) and 50-74 (STKKRKVPAKGSKKGCMKGKGGPEN). The Nuclear localization signal signature appears at 19–55 (RKRKSRSRGDGTTVAERLKRWKEYNETVEEVSTKKRK). Residues 52–66 (KKRKVPAKGSKKGCM) show a composition bias toward basic residues. The segment at residues 78–135 (SFRGVRQRIWGKWVAEIREPNRGSRLWLGTFPTAQEAASAYDEAAKAMYGPLARLNFP) is a DNA-binding region (AP2/ERF). A disordered region spans residues 279–304 (QDRYPGNSVANGSYRPESQQSGFDPL). The segment covering 286–304 (SVANGSYRPESQQSGFDPL) has biased composition (polar residues).

Belongs to the AP2/ERF transcription factor family. ERF subfamily. As to quaternary structure, interacts with MED25. Binds to DPB3-1 in the nucleus during heat-stress. In terms of processing, ubiquitinated by DRIP1 and DRIP2. Ubiquitination probably leads to its subsequent degradation, thus negatively regulating response to drought. In terms of tissue distribution, expressed preferentially in roots and stems, and at a lower level in leaves.

The protein localises to the nucleus. Functionally, transcriptional activator that binds specifically to the DNA sequence 5'-[AG]CCGAC-3'. Binding to the C-repeat/DRE element mediates high salinity- and dehydration-inducible transcription. Promotes the expression of heat stress-inducible genes by contributing to the formation of a heat stress-specific transcriptional complex with NF-Y subunits (e.g. DPB3-1, NF-YA2 and NF-YB3) at the promoter of target genes, thus promoting heat tolerance. In Arabidopsis thaliana (Mouse-ear cress), this protein is Dehydration-responsive element-binding protein 2A.